Reading from the N-terminus, the 401-residue chain is Imidazolonepropionase (401 aa).

2 residues coordinate Fe(3+): His66 and His68. 2 residues coordinate Zn(2+): His66 and His68. Arg75, Tyr138, and His171 together coordinate 4-imidazolone-5-propanoate. Position 138 (Tyr138) interacts with N-formimidoyl-L-glutamate. His236 is a Fe(3+) binding site. His236 lines the Zn(2+) pocket. A 4-imidazolone-5-propanoate-binding site is contributed by Gln239. Position 311 (Asp311) interacts with Fe(3+). Asp311 lines the Zn(2+) pocket. The N-formimidoyl-L-glutamate site is built by Asn313 and Gly315. Thr316 provides a ligand contact to 4-imidazolone-5-propanoate.

It belongs to the metallo-dependent hydrolases superfamily. HutI family. The cofactor is Zn(2+). Requires Fe(3+) as cofactor.

The protein localises to the cytoplasm. The enzyme catalyses 4-imidazolone-5-propanoate + H2O = N-formimidoyl-L-glutamate. The protein operates within amino-acid degradation; L-histidine degradation into L-glutamate; N-formimidoyl-L-glutamate from L-histidine: step 3/3. Functionally, catalyzes the hydrolytic cleavage of the carbon-nitrogen bond in imidazolone-5-propanoate to yield N-formimidoyl-L-glutamate. It is the third step in the universal histidine degradation pathway. The polypeptide is Imidazolonepropionase (Pseudomonas putida (strain ATCC 47054 / DSM 6125 / CFBP 8728 / NCIMB 11950 / KT2440)).